A 236-amino-acid chain; its full sequence is Ribose-5-phosphate isomerase A (236 aa).

Substrate-binding positions include threonine 31–threonine 34, aspartate 88–aspartate 91, and lysine 101–glycine 104. Glutamate 110 functions as the Proton acceptor in the catalytic mechanism. Lysine 128 is a binding site for substrate.

The protein belongs to the ribose 5-phosphate isomerase family. In terms of assembly, homodimer.

The enzyme catalyses aldehydo-D-ribose 5-phosphate = D-ribulose 5-phosphate. It participates in carbohydrate degradation; pentose phosphate pathway; D-ribose 5-phosphate from D-ribulose 5-phosphate (non-oxidative stage): step 1/1. Its function is as follows. Catalyzes the reversible conversion of ribose-5-phosphate to ribulose 5-phosphate. The sequence is that of Ribose-5-phosphate isomerase A from Thermosynechococcus vestitus (strain NIES-2133 / IAM M-273 / BP-1).